Consider the following 663-residue polypeptide: MTKQTLSFQAEVAQLLHLVTHSLYSNKEIFLRELISNASDACDKLRYEAINDSGLYEDAPTLEVRVSFDPAAKTLTISDNGIGMSAQEAIDHLGTIAKSGTKDFVSKLSGDQKADSQLIGQFGVGFYSGFIVADKITVESRRAGMKASEGVRWISGGAGDFEVETIERAARGTSVILHLRDDAMDYCSAWKLKSIINKYSDHISLPILMEKEEWKDGELINPSDEKGGRQPGGMVKTGEWETVNKGNAIWARAKKDITPEQYTEFYKQISHDFEAPLAYTHNRVEGSTEYTQLLYLPSKAPMDLFNREKSAGVKLYVKRVFIMDDAEALLPTYLRFVKGVVDSADLPLNVSRELLQESRDVKAIREGCTKRVLGMLEDLAKHDKLPAPSADGGTDTTAGVSDVLSEEDKANEGKYSKFYAEFGAVLKEGLGEDYANKDRLAKLLRFASSSTDTVSVSFADYKARMKEGQEAIYYITADTPAAAKNSPQLEVFKKKGIEVLLMTDRVDEWALNYLQEFDGTPLQSVAKGAVDLGKLQDEAEKKAAEEAAETFKPLLAKLKEALKDKAEDVRVTTRLVDSPACLVVQDHGMSTQLARMLKQAGQAAPDVKPVLEVNAEHPLVKKLDGSVHFNDLAHILFDQALLAEGGLPADPAAYVKRVNALLV.

The interval 1–352 (MTKQTLSFQA…SADLPLNVSR (352 aa)) is a; substrate-binding. Residues 218-228 (ELINPSDEKGG) are compositionally biased toward basic and acidic residues. The tract at residues 218-237 (ELINPSDEKGGRQPGGMVKT) is disordered. The tract at residues 353-595 (ELLQESRDVK…DHGMSTQLAR (243 aa)) is b. Residues 596–663 (MLKQAGQAAP…YVKRVNALLV (68 aa)) form a c region.

This sequence belongs to the heat shock protein 90 family. Homodimer.

The protein localises to the cytoplasm. In terms of biological role, molecular chaperone. Has ATPase activity. This chain is Chaperone protein HtpG, found in Albidiferax ferrireducens (strain ATCC BAA-621 / DSM 15236 / T118) (Rhodoferax ferrireducens).